The primary structure comprises 228 residues: Urease accessory protein UreF (228 aa).

The protein belongs to the UreF family. In terms of assembly, ureD, UreF and UreG form a complex that acts as a GTP-hydrolysis-dependent molecular chaperone, activating the urease apoprotein by helping to assemble the nickel containing metallocenter of UreC. The UreE protein probably delivers the nickel.

The protein localises to the cytoplasm. Functionally, required for maturation of urease via the functional incorporation of the urease nickel metallocenter. The polypeptide is Urease accessory protein UreF (Lachnoclostridium phytofermentans (strain ATCC 700394 / DSM 18823 / ISDg) (Clostridium phytofermentans)).